Here is a 449-residue protein sequence, read N- to C-terminus: Asparagine--tRNA ligase (449 aa).

Belongs to the class-II aminoacyl-tRNA synthetase family. As to quaternary structure, homodimer.

It is found in the cytoplasm. The enzyme catalyses tRNA(Asn) + L-asparagine + ATP = L-asparaginyl-tRNA(Asn) + AMP + diphosphate + H(+). The protein is Asparagine--tRNA ligase of Mesomycoplasma hyopneumoniae (strain 7448) (Mycoplasma hyopneumoniae).